A 1655-amino-acid polypeptide reads, in one-letter code: Protein scribble homolog (1655 aa).

The sufficient for targeting to adherens junction and to inhibit cell proliferation stretch occupies residues 1–818; that stretch reads MLKCIPLWRC…MRVWRERMVE (818 aa). Ser37 is modified (phosphoserine). 16 LRR repeats span residues 37-58, 60-81, 83-104, 106-127, 129-150, 152-174, 175-197, 198-219, 221-243, 244-265, 267-288, 290-312, 313-334, 336-357, 359-381, and 382-402; these read SLEE…FFRL, NLRK…VANF, QLVE…IKFC, ALEI…FTQL, SLAH…VGNL, NLVT…SFLV, KLEQ…GALP, NLRE…LGNL, RLVC…GGLV, LLTD…IGQL, QLSI…IGDC, NLSE…GKLT, KLTN…IGGC, ALSV…LAHT, ELHV…THLN, and LKAL…QTED. Thr378 is modified (phosphothreonine). 3 disordered regions span residues 417–440, 459–606, and 628–702; these read PQQP…WSDA, DAEE…IRKD, and LLQG…VSAP. The stretch at 458–474 forms a coiled coil; the sequence is EDAEEAAAEKRGLQRRA. Thr475 bears the Phosphothreonine mark. Positions 479–494 are enriched in basic and acidic residues; it reads SELKVMKRSIEGRRSE. Residue Ser504 is modified to Phosphoserine. Residues 537-555 are compositionally biased toward low complexity; sequence EGPSAEAQGGSQQEATTAG. Composition is skewed to acidic residues over residues 556–565 and 660–694; these read GEEDAEEDYQ and EEEE…EEDK. A coiled-coil region spans residues 656 to 701; that stretch reads RAQKEEEEEEEGSPQEEEEEEEEENRAEEEEASTEEEDKEGAVVSA. Ser688 carries the phosphoserine modification. Position 689 is a phosphothreonine (Thr689). Phosphoserine is present on residues Ser708 and Ser764. Residues 717 to 1229 form an interaction with ARHGEF7 region; that stretch reads IEPARIEEEE…SLESISSIDR (513 aa). The PDZ 1 domain maps to 728 to 815; it reads TLTILRQTGG…AVQMRVWRER (88 aa). Residues 728–1194 are required for interaction with VIM; the sequence is TLTILRQTGG…TVLVCDGFEA (467 aa). Thr826 is modified (phosphothreonine). Positions 827–853 are disordered; that stretch reads PLRPEDDYSPRERRGGGLRLPLLPPES. The segment covering 829–841 has biased composition (basic and acidic residues); it reads RPEDDYSPRERRG. A phosphoserine mark is found at Ser835, Ser853, Ser875, and Ser939. PDZ domains are found at residues 862-950, 1004-1093, and 1100-1194; these read VACL…EREA, EIRL…RRDP, and ELCI…GFEA. The interaction with tick-borne encephalitis virus RNA-directed RNA polymerase NS5 stretch occupies residues 1105 to 1117; that stretch reads KAPGERLGISIRG. Phosphoserine occurs at positions 1140, 1220, 1223, 1226, 1232, 1276, 1279, 1295, 1298, 1306, and 1309. Positions 1227–1242 are enriched in basic and acidic residues; it reads IDRELSPEGPGKEKEL. Positions 1227–1246 are disordered; that stretch reads IDRELSPEGPGKEKELPGQT. A disordered region spans residues 1277-1489; sequence AGSVQRVPSG…APERALSPAE (213 aa). Residues 1302-1311 show a composition bias toward pro residues; the sequence is QQPPSPPSPD. Thr1342 bears the Phosphothreonine mark. Ser1348 bears the Phosphoserine mark. Residues 1353-1365 show a composition bias toward basic and acidic residues; that stretch reads SFRERQKYFELEV. The residue at position 1378 (Ser1378) is a Phosphoserine. Residues 1379–1419 adopt a coiled-coil conformation; sequence LVGADDLRKMQEEEARKLQQKRAQMLREAAEAGAEARLALD. Residues 1383 to 1395 are compositionally biased toward basic and acidic residues; that stretch reads DDLRKMQEEEARK. Over residues 1409 to 1421 the composition is skewed to low complexity; the sequence is EAGAEARLALDGE. A compositionally biased stretch (acidic residues) spans 1422–1432; sequence TLGEEEQEDEQ. Ser1437, Ser1445, and Ser1448 each carry phosphoserine. Residues 1461–1472 show a composition bias toward basic and acidic residues; the sequence is AKAERRHQERLR. Phosphoserine is present on residues Ser1475, Ser1486, and Ser1508. Residues 1520–1568 form a disordered region; the sequence is LSRSQEGRGTRGPLERLAEAPSPAPTPSPTPVEDLGPQTSTSPGRLPLS. Positions 1524–1537 are enriched in basic and acidic residues; sequence QEGRGTRGPLERLA. At Ser1541 the chain carries Phosphoserine. At Thr1545 the chain carries Phosphothreonine. Ser1547, Ser1561, and Ser1591 each carry phosphoserine. The segment at 1622-1655 is disordered; that stretch reads GRPSPGAVGPEDVALCSSRRPVRPGRRGLGPVPS.

Belongs to the LAP (LRR and PDZ) protein family. In terms of assembly, interacts with UBE3A. Interacts with PAK1 and PAK2. Interacts (via PDZ domains) with VANGL2. Interacts (via PDZ domains) with LPP and TRIP6; the interaction is direct. Interacts (via PDZ domains) with TJP2. Interacts (via PDZ domains) with APC; may mediate APC targeting to adherens junctions of epithelial cells. Interacts (via PDZ domains) with TSHR; regulates TSHR trafficking and function. Interacts with ARHGEF7 and GIT1; interacts directly with ARHGEF7. Interacts with CTNNB1. Interacts with MAPK12. Interacts (via PDZ domains 1 and 3) with MCC. Interacts with DLG5. Interacts with STK4/MST1 and LATS1 in the presence of DLG5. Interacts (via PDZ domain 3) with CRTAM (via PDZ-binding motif); the interaction promotes CRTAM and SCRIB polarization in a subset of CD4+ T-cells. Interacts with YES1, when YES1 is in a closed conformation; the interaction facilitates YES1 autophosphorylation. Interacts (via PDZ domains) with VIM; the interaction protects SCRIB from proteasomal degradation and facilitates SCRIB localization to intermediate filaments, the interaction is reduced by cell contact inhibition. As to quaternary structure, (Microbial infection) Interacts (via fourth PDZ domain) with tick-borne encephalitis virus RNA-directed RNA polymerase NS5; this interaction targets viral NS5 to the cell membrane periphery and nucleus and prevents STAT1 phosphorylation, and thus, the activation of the JAK-STAT signaling pathway. Interacts with HPV E6. Interacts with influenza A virus protein NS1; the interaction results in the translocation of SCRIB from the cell membrane to perinuclear puncta. Post-translationally, ubiquitinated; targeted for UBE3A-dependent multiubiquitination in the presence of high-risk HPV E6 proteins and degraded. In terms of processing, palmitoylated. Could be depalmitoylated by LYPLA1 and/or LYPLA2. Palmitoylation of SCRIB by ZDHHC7 is required for its localization to cell-cell junctions, function in the establishement of epithelial cell polarity and the regulation of downstream signaling pathways important for epithelial cell differentiation. In terms of tissue distribution, expressed in kidney, skeletal muscles, liver, lung, breast, intestine, placenta and skin mainly in epithelial cells (at protein level).

Its subcellular location is the cell membrane. It localises to the cell junction. The protein resides in the adherens junction. The protein localises to the cell projection. It is found in the lamellipodium. Its subcellular location is the cytoplasm. It localises to the postsynapse. The protein resides in the presynapse. Functionally, scaffold protein involved in different aspects of polarized cell differentiation regulating epithelial and neuronal morphogenesis and T-cell polarization. Via its interaction with CRTAM, required for the late phase polarization of a subset of CD4+ T-cells, which in turn regulates TCR-mediated proliferation and IFNG and IL22 production. Plays a role in cell directional movement, cell orientation, cell sheet organization and Golgi complex polarization at the cell migration front. Promotes epithelial cell layer barrier function via maintaining cell-cell adhesion. Most probably functions in the establishment of apico-basal cell polarity. May function in cell proliferation regulating progression from G1 to S phase and as a positive regulator of apoptosis for instance during acinar morphogenesis of the mammary epithelium. May regulate cell invasion via MAPK-mediated cell migration and adhesion. May play a role in exocytosis and in the targeting of synaptic vesicles to synapses. Functions as an activator of Rac GTPase activity. In Homo sapiens (Human), this protein is Protein scribble homolog.